The sequence spans 145 residues: D-aminoacyl-tRNA deacylase (145 aa).

The Gly-cisPro motif, important for rejection of L-amino acids signature appears at 137 to 138 (GP).

The protein belongs to the DTD family. As to quaternary structure, homodimer.

It is found in the cytoplasm. It carries out the reaction glycyl-tRNA(Ala) + H2O = tRNA(Ala) + glycine + H(+). The catalysed reaction is a D-aminoacyl-tRNA + H2O = a tRNA + a D-alpha-amino acid + H(+). Functionally, an aminoacyl-tRNA editing enzyme that deacylates mischarged D-aminoacyl-tRNAs. Also deacylates mischarged glycyl-tRNA(Ala), protecting cells against glycine mischarging by AlaRS. Acts via tRNA-based rather than protein-based catalysis; rejects L-amino acids rather than detecting D-amino acids in the active site. By recycling D-aminoacyl-tRNA to D-amino acids and free tRNA molecules, this enzyme counteracts the toxicity associated with the formation of D-aminoacyl-tRNA entities in vivo and helps enforce protein L-homochirality. The chain is D-aminoacyl-tRNA deacylase from Pseudomonas putida (strain W619).